Here is a 72-residue protein sequence, read N- to C-terminus: Small ribosomal subunit protein bS18c (72 aa).

This sequence belongs to the bacterial ribosomal protein bS18 family. In terms of assembly, part of the 30S ribosomal subunit.

Its subcellular location is the plastid. The protein localises to the chloroplast. The protein is Small ribosomal subunit protein bS18c of Emiliania huxleyi (Coccolithophore).